Here is a 446-residue protein sequence, read N- to C-terminus: Tubulin beta-8 chain (446 aa).

Gln-11, Glu-69, Ser-138, Gly-142, Thr-143, Gly-144, Asn-204, and Asn-226 together coordinate GTP. Residue Glu-69 coordinates Mg(2+). Residues 426–446 (QDATAEDDYDEDDDAAAADEA) are disordered. Residues 429-446 (TAEDDYDEDDDAAAADEA) are compositionally biased toward acidic residues.

Belongs to the tubulin family. As to quaternary structure, dimer of alpha and beta chains. A typical microtubule is a hollow water-filled tube with an outer diameter of 25 nm and an inner diameter of 15 nM. Alpha-beta heterodimers associate head-to-tail to form protofilaments running lengthwise along the microtubule wall with the beta-tubulin subunit facing the microtubule plus end conferring a structural polarity. Microtubules usually have 13 protofilaments but different protofilament numbers can be found in some organisms and specialized cells. Mg(2+) serves as cofactor. As to expression, expressed in anthers.

The protein localises to the cytoplasm. The protein resides in the cytoskeleton. In terms of biological role, tubulin is the major constituent of microtubules, a cylinder consisting of laterally associated linear protofilaments composed of alpha- and beta-tubulin heterodimers. Microtubules grow by the addition of GTP-tubulin dimers to the microtubule end, where a stabilizing cap forms. Below the cap, tubulin dimers are in GDP-bound state, owing to GTPase activity of alpha-tubulin. The chain is Tubulin beta-8 chain (TUBB8) from Oryza sativa subsp. japonica (Rice).